A 260-amino-acid chain; its full sequence is Proteasome assembly chaperone 2 (260 aa).

Belongs to the PSMG2 family. In terms of assembly, forms a heterodimer with psmg1. Post-translationally, degraded by the proteasome upon completion of 20S proteasome maturation.

The protein resides in the nucleus. Chaperone protein which promotes assembly of the 20S proteasome as part of a heterodimer with psmg1. In Danio rerio (Zebrafish), this protein is Proteasome assembly chaperone 2.